The sequence spans 649 residues: MGDRSEQYGDIPPISSQHRMHGYGNNGEPAAMPGDGQQNWGSGPGIAHTHSMRTASTATPGMDNLGPSAVGGGISGIALGVANTHDRQSGIDAFRDADATLGYIPAERGYHTTGADNPYVPSPPSVGPGPDESSEGLRSHETFGSSAALSAAGAPAGNWTPPSGSRHSFLDGSYQGVASGPYQRHSAYSSQDYPADINPDDILDDGDDGFAAAPSNKPNAAGGAATGGAAGGLLGEFFGAKKAADASYDPVPGAGLPSVEKYAKPRPSGASRKRGWIIGGILAFIVIGAIVGGAVGGTLGNRRSETASESSEVSADDDTETNGDLDKNSDEIKSLMAMEGLHKVFPGMDYTPWGVQHPECDKWPPSQNNVTRDMAVLSRLTNTVRLYGTDCNQTEMVLHAIDRLELTDMKLWLGVWIDTNTTTNERQLSQLYDILDKRSDHSVFKGAIIGNEALYRAGSTKEEARKNIIDYMRQVRKHFNDHNIDIKVATSDLGDNWDETLADATDVVMSNVHPFFGGVEVSKAAGWTWSFWNSHNAPLTQGTNKGNIIAEVGWPSGGGNDCGDGANCKDDTSGAVAGVKQMNQFMADWVCPALENGTDYFWFEAFDEPWKVKFNKGDEQWEDKWGLMDPGRNLKPGIEIPDCGGKTAA.

2 disordered regions span residues 1–50 and 110–224; these read MGDR…AHTH and YHTT…AGGA. At 1 to 274 the chain is on the cytoplasmic side; sequence MGDRSEQYGD…PRPSGASRKR (274 aa). Residues 144-157 are compositionally biased toward low complexity; it reads GSSAALSAAGAPAG. Over residues 198-208 the composition is skewed to acidic residues; the sequence is NPDDILDDGDD. Residues 275-295 form a helical; Signal-anchor for type II membrane protein membrane-spanning segment; the sequence is GWIIGGILAFIVIGAIVGGAV. The Extracellular segment spans residues 296–649; sequence GGTLGNRRSE…IPDCGGKTAA (354 aa). The disordered stretch occupies residues 301-329; it reads NRRSETASESSEVSADDDTETNGDLDKNS. Residues 314 to 323 show a composition bias toward acidic residues; the sequence is SADDDTETNG. Residues Asn369, Asn392, and Asn420 are each glycosylated (N-linked (GlcNAc...) asparagine). Catalysis depends on Glu452, which acts as the Proton donor. The active-site Nucleophile is the Glu551. Asn596 carries N-linked (GlcNAc...) asparagine glycosylation.

Belongs to the glycosyl hydrolase 17 family.

The protein localises to the cell membrane. The catalysed reaction is Hydrolysis of (1-&gt;3)-beta-D-glucosidic linkages in (1-&gt;3)-beta-D-glucans.. Functionally, glucanases play a role in cell expansion during growth, in cell-cell fusion during mating, and in spore release during sporulation. This enzyme may be involved in beta-glucan degradation. Active on laminarin and lichenan. This chain is Glucan endo-1,3-beta-glucosidase btgC (btgC), found in Emericella nidulans (strain FGSC A4 / ATCC 38163 / CBS 112.46 / NRRL 194 / M139) (Aspergillus nidulans).